The primary structure comprises 136 residues: HTH-type transcriptional regulator LrpA (136 aa).

The HTH asnC-type domain maps to 2–63; that stretch reads IDEIDKKILD…EVNQVKLGFS (62 aa). The H-T-H motif DNA-binding region spans 21–40; the sequence is MKKLGEKVHLTAPATASRVV.

Functionally, negative regulation of glyA transcription and kinB-dependent sporulation. In Bacillus subtilis (strain 168), this protein is HTH-type transcriptional regulator LrpA (lrpA).